The sequence spans 143 residues: Nucleoside diphosphate kinase (143 aa).

ATP is bound by residues Lys11, Phe59, Arg87, Thr93, Arg104, and Asn114. The active-site Pros-phosphohistidine intermediate is His117.

This sequence belongs to the NDK family. In terms of assembly, homotetramer. Mg(2+) serves as cofactor.

The protein resides in the cytoplasm. It catalyses the reaction a 2'-deoxyribonucleoside 5'-diphosphate + ATP = a 2'-deoxyribonucleoside 5'-triphosphate + ADP. The catalysed reaction is a ribonucleoside 5'-diphosphate + ATP = a ribonucleoside 5'-triphosphate + ADP. Functionally, major role in the synthesis of nucleoside triphosphates other than ATP. The ATP gamma phosphate is transferred to the NDP beta phosphate via a ping-pong mechanism, using a phosphorylated active-site intermediate. This is Nucleoside diphosphate kinase from Shigella boydii serotype 4 (strain Sb227).